Reading from the N-terminus, the 411-residue chain is ATP phosphoribosyltransferase 1, chloroplastic (411 aa).

Polar residues predominate over residues 1-12 (MSLLLPTNLQQY). The interval 1-27 (MSLLLPTNLQQYPSSSSFPSSTPILSP) is disordered. The N-terminal 49 residues, 1–49 (MSLLLPTNLQQYPSSSSFPSSTPILSPPPSTAFSVIVPRRRCLRLVTSC), are a transit peptide targeting the chloroplast. Low complexity predominate over residues 13–24 (PSSSSFPSSTPI). Position 50 is an N-acetylvaline (V50).

The protein belongs to the ATP phosphoribosyltransferase family. Long subfamily. Requires Mg(2+) as cofactor. In terms of tissue distribution, expressed in leaves and at lower levels in roots (at protein level).

Its subcellular location is the plastid. The protein localises to the chloroplast. The catalysed reaction is 1-(5-phospho-beta-D-ribosyl)-ATP + diphosphate = 5-phospho-alpha-D-ribose 1-diphosphate + ATP. The protein operates within amino-acid biosynthesis; L-histidine biosynthesis; L-histidine from 5-phospho-alpha-D-ribose 1-diphosphate: step 1/9. Feedback inhibited by L-histidine. Catalyzes the condensation of ATP and 5-phosphoribose 1-diphosphate to form N'-(5'-phosphoribosyl)-ATP (PR-ATP). This is ATP phosphoribosyltransferase 1, chloroplastic (HISN1A) from Arabidopsis thaliana (Mouse-ear cress).